The sequence spans 295 residues: 4-hydroxy-tetrahydrodipicolinate synthase (295 aa).

Thr-47 provides a ligand contact to pyruvate. Tyr-135 functions as the Proton donor/acceptor in the catalytic mechanism. Lys-163 serves as the catalytic Schiff-base intermediate with substrate. Ile-206 contacts pyruvate.

This sequence belongs to the DapA family. Homodimer.

The protein localises to the cytoplasm. The catalysed reaction is L-aspartate 4-semialdehyde + pyruvate = (2S,4S)-4-hydroxy-2,3,4,5-tetrahydrodipicolinate + H2O + H(+). It participates in amino-acid biosynthesis; L-lysine biosynthesis via DAP pathway; (S)-tetrahydrodipicolinate from L-aspartate: step 3/4. Functionally, catalyzes the condensation of (S)-aspartate-beta-semialdehyde [(S)-ASA] and pyruvate to 4-hydroxy-tetrahydrodipicolinate (HTPA). In Staphylococcus saprophyticus subsp. saprophyticus (strain ATCC 15305 / DSM 20229 / NCIMB 8711 / NCTC 7292 / S-41), this protein is 4-hydroxy-tetrahydrodipicolinate synthase.